Reading from the N-terminus, the 328-residue chain is Galactinol synthase 10 (328 aa).

Lys106 is a catalytic residue. 3 residues coordinate Mn(2+): Asp122, Asp124, and His248.

This sequence belongs to the glycosyltransferase 8 family. Galactosyltransferase subfamily. A divalent metal cation is required as a cofactor.

It localises to the cytoplasm. The enzyme catalyses myo-inositol + UDP-alpha-D-galactose = alpha-D-galactosyl-(1-&gt;3)-1D-myo-inositol + UDP + H(+). Galactinol synthase involved in the biosynthesis of raffinose family oligosaccharides (RFOs) that function as osmoprotectants. May promote plant stress tolerance. The protein is Galactinol synthase 10 (GOLS10) of Arabidopsis thaliana (Mouse-ear cress).